We begin with the raw amino-acid sequence, 681 residues long: Hydroxyproline O-galactosyltransferase GALT6 (681 aa).

Residues 1 to 28 (MRKPKLSKLERLEKFDIFVSLSKQRSVQ) are Cytoplasmic-facing. The helical; Signal-anchor for type II membrane protein transmembrane segment at 29-49 (ILMAVGLLYMLLITFEIPFVF) threads the bilayer. The Lumenal portion of the chain corresponds to 50-681 (KTGLSSLSQD…TGKPQCCNMR (632 aa)). The disordered stretch occupies residues 57–80 (SQDPLTRPEKHNSQRELQERRAPT). The span at 62–78 (TRPEKHNSQRELQERRA) shows a compositional bias: basic and acidic residues. The Galectin domain occupies 187 to 401 (NIMELPCGLT…DIDVHSVFAG (215 aa)). Asparagine 629 is a glycosylation site (N-linked (GlcNAc...) asparagine).

The protein belongs to the glycosyltransferase 31 family. It depends on Mn(2+) as a cofactor. In terms of tissue distribution, expressed in junveile leaves and stems, and at lower levels in cauline leaves and siliques.

The protein localises to the golgi apparatus membrane. It functions in the pathway protein modification; protein glycosylation. Its function is as follows. Possesses hydroxyproline O-galactosyltransferase activity. Transfers galactose from UDP-galactose to hydroxyproline residues in the arabinogalactan proteins (AGPs). Is specific for AGPs containing non-contiguous peptidyl hydroxyproline residues. Utilizes UDP-galactose solely as sugar donor. The addition of galactose onto the peptidyl hydroxyproline residues in AGP core proteins represents the first committed step in arabinogalactan polysaccharide addition. AGP glycans play essential roles in both vegetative and reproductive plant growth. This chain is Hydroxyproline O-galactosyltransferase GALT6, found in Arabidopsis thaliana (Mouse-ear cress).